The following is a 403-amino-acid chain: Peroxisomal membrane protein PEX13 (403 aa).

Pro residues predominate over residues 1–11 (MASQPPPPPKP). The interval 1 to 69 (MASQPPPPPK…SQQTGGNNVN (69 aa)) is disordered. At 1 to 134 (MASQPPPPPK…SSRGAFQSIE (134 aa)) the chain is on the peroxisomal matrix side. The segment covering 59 to 69 (PSQQTGGNNVN) has biased composition (polar residues). Residues 135–155 (SIVHAFASVSMMMDATFSAVY) traverse the membrane as a helical segment. The tract at residues 145–233 (MMMDATFSAV…EDQANNSAKS (89 aa)) is targeting to peroxisomes. The Cytoplasmic segment spans residues 156 to 174 (NSFRAVLDVANHFSRLKIH). A helical membrane pass occupies residues 175 to 192 (FTKVFSAFALVRTIRYLY). An interaction with PEX19 region spans residues 175-196 (FTKVFSAFALVRTIRYLYRRLQ). Topologically, residues 193–233 (RRLQWMMGLRRGSENEDLWAESEGTVACLGAEDQANNSAKS) are peroxisomal matrix. Residues 234 to 254 (WPIFLFFAVILGGPYLIWKLL) traverse the membrane as a helical segment. The Cytoplasmic segment spans residues 255-403 (STHSDEVTDS…TGKNGDKQDL (149 aa)). The SH3 domain maps to 272-336 (DDHVVARAEY…PANYVKILGK (65 aa)). Disordered stretches follow at residues 341 to 364 (KTVESSTMPKQQQSFTNPTSVKGV) and 381 to 403 (FVETNKVAGTPDSTGKNGDKQDL). A compositionally biased stretch (polar residues) spans 344–364 (ESSTMPKQQQSFTNPTSVKGV).

It belongs to the peroxin-13 family. Interacts (via SH3 domain) with PEX14 (via SH3-binding motif); forming the PEX13-PEX14 docking complex. Interacts with PEX19.

Its subcellular location is the peroxisome membrane. Its function is as follows. Component of the PEX13-PEX14 docking complex, a translocon channel that specifically mediates the import of peroxisomal cargo proteins bound to PEX5 receptor. The PEX13-PEX14 docking complex forms a large import pore which can be opened to a diameter of about 9 nm. Mechanistically, PEX5 receptor along with cargo proteins associates with the PEX14 subunit of the PEX13-PEX14 docking complex in the cytosol, leading to the insertion of the receptor into the organelle membrane with the concomitant translocation of the cargo into the peroxisome matrix. Involved in the import of PTS1- and PTS2-type containing proteins. This Rattus norvegicus (Rat) protein is Peroxisomal membrane protein PEX13.